The primary structure comprises 235 residues: Aspartate/glutamate leucyltransferase (235 aa).

The protein belongs to the R-transferase family. Bpt subfamily.

It is found in the cytoplasm. It carries out the reaction N-terminal L-glutamyl-[protein] + L-leucyl-tRNA(Leu) = N-terminal L-leucyl-L-glutamyl-[protein] + tRNA(Leu) + H(+). It catalyses the reaction N-terminal L-aspartyl-[protein] + L-leucyl-tRNA(Leu) = N-terminal L-leucyl-L-aspartyl-[protein] + tRNA(Leu) + H(+). In terms of biological role, functions in the N-end rule pathway of protein degradation where it conjugates Leu from its aminoacyl-tRNA to the N-termini of proteins containing an N-terminal aspartate or glutamate. This is Aspartate/glutamate leucyltransferase from Shewanella putrefaciens (strain CN-32 / ATCC BAA-453).